The following is a 414-amino-acid chain: MAFVAPVATVRATTKSSVCQVQGRSTFAQFSGMKKVNQSSRLQPAQSGSAFGGYSDANDAFYTRVSGIVAATFGPTMKVRVAINGFGRIGRNFIRCWAGRSDSNMEVVCINDTSGVKTASHLLKYDSILGTFDADVSAGEDTISVNGKTIKIVSNRNPLQLPWKEMNIDIVVEATGVFVDAPGAGKHIEAGAKKVLITAPGKGDGIGTFVVGVNEKDYSHDKYDIVSNASCTTNCMAPFMKVLDDEFGVVRGMMTTTHSYTGDQRLLDAGHRDLRRARSAALNIVPTTTGAAKAVALVVPSLKGKLNGIALRVPTPNVSVCDVVMQVNKKTFKEEVNGALLKASEGAMKGIIKYSDEPLVSCDHRGTDESTIIDSSLTMVMGDDMIKVVAWYDNEWGYSQRVVDLGEVMARQWK.

The transit peptide at 1–76 (MAFVAPVATV…GIVAATFGPT (76 aa)) directs the protein to the chloroplast. NADP(+) is bound by residues 88-89 (RI), aspartate 112, and arginine 156. D-glyceraldehyde 3-phosphate is bound by residues 230–232 (SCT), threonine 261, arginine 276, 289–290 (TG), and arginine 312. The active-site Nucleophile is the cysteine 231. Asparagine 394 contacts NADP(+).

It belongs to the glyceraldehyde-3-phosphate dehydrogenase family. As to quaternary structure, homotetramer.

The protein resides in the plastid. Its subcellular location is the chloroplast. It carries out the reaction D-glyceraldehyde 3-phosphate + phosphate + NADP(+) = (2R)-3-phospho-glyceroyl phosphate + NADPH + H(+). Its pathway is carbohydrate biosynthesis; Calvin cycle. This chain is Glyceraldehyde-3-phosphate dehydrogenase, chloroplastic (GAPA), found in Chondrus crispus (Carrageen Irish moss).